Reading from the N-terminus, the 657-residue chain is uncharacterized protein (657 aa).

S114 carries the phosphoserine modification. Disordered stretches follow at residues 142 to 216 (LASQ…SDEE), 228 to 248 (SSRE…EEEE), 291 to 312 (STRS…SHTP), 335 to 354 (SSPG…EGAD), and 399 to 522 (AEAS…SGRH). Polar residues predominate over residues 143-169 (ASQNTDKTSQNQARELPVTENNAQNAK). The segment covering 190–206 (AGKERTLQTPKQKEPAR) has biased composition (basic and acidic residues). S213 carries the post-translational modification Phosphoserine. Composition is skewed to polar residues over residues 234-243 (TNQGFSSANV) and 301-312 (SHVSSDTASHTP). A compositionally biased stretch (acidic residues) spans 343–354 (ETVDEPVSEGAD). Residues 437–451 (SASSASAIQQDSTSS) show a composition bias toward low complexity. Residues 462–484 (NTVSSAYSEDFENSPSLTASEPT) are compositionally biased toward polar residues. Over residues 485 to 495 (AHSKESLDRTL) the composition is skewed to basic and acidic residues. Positions 499-513 (SESSSSVKTDLPQTA) are enriched in polar residues.

This is an uncharacterized protein from Homo sapiens (Human).